Here is a 401-residue protein sequence, read N- to C-terminus: Beta-ketoadipyl-CoA thiolase (401 aa).

Catalysis depends on cysteine 90, which acts as the Acyl-thioester intermediate. Catalysis depends on proton acceptor residues histidine 357 and cysteine 387.

This sequence belongs to the thiolase-like superfamily. Thiolase family.

It carries out the reaction succinyl-CoA + acetyl-CoA = 3-oxoadipyl-CoA + CoA. It functions in the pathway aromatic compound metabolism; beta-ketoadipate pathway; acetyl-CoA and succinyl-CoA from 3-oxoadipate: step 2/2. Functionally, catalyzes thiolytic cleavage of beta-ketoadipyl-CoA to succinyl-CoA and acetyl-CoA. In Acinetobacter baylyi (strain ATCC 33305 / BD413 / ADP1), this protein is Beta-ketoadipyl-CoA thiolase (pcaF).